The primary structure comprises 365 residues: Probable dual-specificity RNA methyltransferase RlmN (365 aa).

The active-site Proton acceptor is the Glu108. The Radical SAM core domain maps to 114 to 352; that stretch reads YPDRNTVCIS…SCTVRDTRGR (239 aa). Cys121 and Cys358 are disulfide-bonded. [4Fe-4S] cluster is bound by residues Cys128, Cys132, and Cys135. S-adenosyl-L-methionine is bound by residues 179 to 180, Ser213, 236 to 238, and Asn315; these read GE and SLH. The active-site S-methylcysteine intermediate is Cys358.

This sequence belongs to the radical SAM superfamily. RlmN family. It depends on [4Fe-4S] cluster as a cofactor.

Its subcellular location is the cytoplasm. It carries out the reaction adenosine(2503) in 23S rRNA + 2 reduced [2Fe-2S]-[ferredoxin] + 2 S-adenosyl-L-methionine = 2-methyladenosine(2503) in 23S rRNA + 5'-deoxyadenosine + L-methionine + 2 oxidized [2Fe-2S]-[ferredoxin] + S-adenosyl-L-homocysteine. It catalyses the reaction adenosine(37) in tRNA + 2 reduced [2Fe-2S]-[ferredoxin] + 2 S-adenosyl-L-methionine = 2-methyladenosine(37) in tRNA + 5'-deoxyadenosine + L-methionine + 2 oxidized [2Fe-2S]-[ferredoxin] + S-adenosyl-L-homocysteine. Functionally, specifically methylates position 2 of adenine 2503 in 23S rRNA and position 2 of adenine 37 in tRNAs. In Mycolicibacterium vanbaalenii (strain DSM 7251 / JCM 13017 / BCRC 16820 / KCTC 9966 / NRRL B-24157 / PYR-1) (Mycobacterium vanbaalenii), this protein is Probable dual-specificity RNA methyltransferase RlmN.